Here is a 596-residue protein sequence, read N- to C-terminus: MAQAWAFLLPVLVLGSYVTSLFLPTYITGPLCGGDGGGRSLFLCAQAPKDQDPSPASTMYKTAFHFQPAKNWMNDPSGPMYFNGIYHEFYQYNLNGPIFGDIVWGHSVSTDLANWIGLEPALVRDTPSDIDGCWTGSVTILPGGKPIIIYTGGDIDQNQAQNIAFPKNRSDPYLREWIKADNNPVLRPDEPGMNSIEFRDPTTGWIGPDGLWRMAVGGELNGYSAALLYKSEDFLNWTKVDHPLYSHNGSNMWECPDFFAVLPGNNAGLDLSAAIPQGAKHALKMSVDSVDKYMIGVYDLHRDAFVPDNVVDDRRLWLRIDYGTFYASKSFFDPNKNRRIIWGWSRETDSPSDDLAKGWAGLHTIPRTIWLAGDGKQLLQWPVEEIESLRTNEINHQGLELNKGDLFEIKEVDAFQADVEIGFELASIDDADPFDPSWLLDPEKHCGEAGASVPGGIGPFGLVILASDNMDEHTEVYFRVYKSQEKYMVLMCSDLRRSSLRPDLEKPAYGGFFEFDLEKERKISLRTLIDRSAVESFGGGGRVCITSRVYPAVLADVGSAHIYAFNNGGATVRVPQLSAWTMRKAQVNVEKGWSAI.

The first 20 residues, 1 to 20 (MAQAWAFLLPVLVLGSYVTS), serve as a signal peptide directing secretion. Aspartate 75 is a catalytic residue. N-linked (GlcNAc...) asparagine glycosylation is found at asparagine 168, asparagine 236, and asparagine 248. Residues cysteine 446 and cysteine 492 are joined by a disulfide bond.

Belongs to the glycosyl hydrolase 32 family. In terms of tissue distribution, expressed in the stem, particularly the penultimate internode. Little expression is detected in roots and in the peduncle part of the stem.

It catalyses the reaction Hydrolysis of terminal, non-reducing (2-&gt;1)-linked beta-D-fructofuranose residues in fructans.. Its activity is regulated as follows. Inhibited by sucrose. In terms of biological role, hydrolyzes inulin-type beta-(2,1)-fructans and beta-(2,1)-linkages in branched fructans. Has low activity against beta-(2,6)-linked fructans. May play a role as a beta-(2,1)-trimmer during graminan biosynthesis. The polypeptide is Fructan 1-exohydrolase w3 (Triticum aestivum (Wheat)).